Consider the following 248-residue polypeptide: tRNA (guanine-N(1)-)-methyltransferase (248 aa).

Residues G114 and 134–139 (IGDYVL) contribute to the S-adenosyl-L-methionine site.

This sequence belongs to the RNA methyltransferase TrmD family. As to quaternary structure, homodimer.

The protein resides in the cytoplasm. The enzyme catalyses guanosine(37) in tRNA + S-adenosyl-L-methionine = N(1)-methylguanosine(37) in tRNA + S-adenosyl-L-homocysteine + H(+). Functionally, specifically methylates guanosine-37 in various tRNAs. This chain is tRNA (guanine-N(1)-)-methyltransferase, found in Blochmanniella floridana.